A 194-amino-acid chain; its full sequence is ECF RNA polymerase sigma factor SigX (194 aa).

The Polymerase core binding motif lies at 32–45 (DLLQEVYIRVLNSY). The segment at residues 136–155 (IQETAKALRFSESKVKTTQH) is a DNA-binding region (H-T-H motif).

It belongs to the sigma-70 factor family. ECF subfamily. Interacts transiently with the RNAP core.

It localises to the cell membrane. Sigma factors are initiation factors that promote the attachment of RNA polymerase (RNAP) to specific initiation sites and are then released. May be involved in the regulation of iron metabolism. Associates with RNAP core during early growth phases, association decreases as cells age. This chain is ECF RNA polymerase sigma factor SigX (sigX), found in Bacillus subtilis (strain 168).